Consider the following 151-residue polypeptide: Ribosome maturation factor RimP (151 aa).

The protein belongs to the RimP family.

It is found in the cytoplasm. Its function is as follows. Required for maturation of 30S ribosomal subunits. The chain is Ribosome maturation factor RimP from Pasteurella multocida (strain Pm70).